The sequence spans 60 residues: Large ribosomal subunit protein uL30 (60 aa).

This sequence belongs to the universal ribosomal protein uL30 family. In terms of assembly, part of the 50S ribosomal subunit.

This is Large ribosomal subunit protein uL30 from Ligilactobacillus salivarius (strain UCC118) (Lactobacillus salivarius).